The sequence spans 75 residues: Small ribosomal subunit protein bS18 (75 aa).

This sequence belongs to the bacterial ribosomal protein bS18 family. Part of the 30S ribosomal subunit. Forms a tight heterodimer with protein bS6.

Functionally, binds as a heterodimer with protein bS6 to the central domain of the 16S rRNA, where it helps stabilize the platform of the 30S subunit. The polypeptide is Small ribosomal subunit protein bS18 (Ruegeria sp. (strain TM1040) (Silicibacter sp.)).